We begin with the raw amino-acid sequence, 255 residues long: Dehydrogenase/reductase SDR family member 11 (255 aa).

Residues 1 to 25 (MERWRDRLALVTGASGGIGAAVARA) form the signal peptide. NADP(+)-binding positions include 13 to 18 (GASGGI), 38 to 39 (RT), Glu-44, 65 to 66 (DL), and Asn-92. Substrate-binding residues include Ser-146 and Tyr-161. NADP(+) contacts are provided by residues Tyr-161, Lys-165, 196–199 (VETQ), and Lys-203. The Proton acceptor role is filled by Tyr-161.

This sequence belongs to the short-chain dehydrogenases/reductases (SDR) family.

It localises to the secreted. It catalyses the reaction a 3beta-hydroxysteroid + NADP(+) = a 3-oxosteroid + NADPH + H(+). It carries out the reaction 17beta-estradiol + NAD(+) = estrone + NADH + H(+). The catalysed reaction is 17beta-estradiol + NADP(+) = estrone + NADPH + H(+). It participates in steroid biosynthesis; estrogen biosynthesis. Inhibited by flavonoids including apigenin, luteolin, genistein, kaempferol and quercetin and also by carbenoxolone, zearalenone, glycyrrhetinic, curcumin and flufenamic acid. In terms of biological role, catalyzes the conversion of the 17-keto group of estrone, 4- and 5-androstenes and 5-alpha-androstanes into their 17-beta-hydroxyl metabolites and the conversion of the 3-keto group of 3-, 3,17- and 3,20- diketosteroids into their 3-hydroxyl metabolites. Exhibits reductive 3-beta-hydroxysteroid dehydrogenase activity toward 5-beta-androstanes, 5-beta-pregnanes, 4-pregnenes and bile acids. May also reduce endogenous and exogenous alpha-dicarbonyl compounds and xenobiotic alicyclic ketones. The chain is Dehydrogenase/reductase SDR family member 11 (DHRS11) from Bos taurus (Bovine).